The following is a 151-amino-acid chain: UPF0178 protein PFLU_5917 (151 aa).

Belongs to the UPF0178 family.

In Pseudomonas fluorescens (strain SBW25), this protein is UPF0178 protein PFLU_5917.